The following is a 153-amino-acid chain: Regulatory protein RecX (153 aa).

It belongs to the RecX family.

Its subcellular location is the cytoplasm. In terms of biological role, modulates RecA activity. This chain is Regulatory protein RecX, found in Pseudomonas aeruginosa (strain UCBPP-PA14).